Here is a 198-residue protein sequence, read N- to C-terminus: Probable host range protein 2-3 (198 aa).

The segment at 153–198 (GENGYEDSTEEEDNEEDTDGVCLYCLEEEEEEDEDEDEDEDEDEEE) is disordered. Composition is skewed to acidic residues over residues 156 to 171 (GYED…EDTD) and 178 to 198 (LEEE…DEEE).

This sequence belongs to the poxviridae C7 protein family.

In terms of biological role, plays a role for multiplication of the virus in different cell types. The polypeptide is Probable host range protein 2-3 (Rabbit fibroma virus (strain Kasza) (RFV)).